A 75-amino-acid polypeptide reads, in one-letter code: UPF0346 protein LEUM_0763 (75 aa).

This sequence belongs to the UPF0346 family.

The chain is UPF0346 protein LEUM_0763 from Leuconostoc mesenteroides subsp. mesenteroides (strain ATCC 8293 / DSM 20343 / BCRC 11652 / CCM 1803 / JCM 6124 / NCDO 523 / NBRC 100496 / NCIMB 8023 / NCTC 12954 / NRRL B-1118 / 37Y).